Reading from the N-terminus, the 443-residue chain is Serine/threonine-protein kinase ISR1 (443 aa).

In terms of domain architecture, Protein kinase spans 135–415 (LPSNKLVGQG…LRNDLFQDWK (281 aa)). ATP contacts are provided by residues 141–149 (VGQGSYSYV) and Lys169. Catalysis depends on Asp280, which acts as the Proton acceptor.

The protein belongs to the protein kinase superfamily. Ser/Thr protein kinase family.

The catalysed reaction is L-seryl-[protein] + ATP = O-phospho-L-seryl-[protein] + ADP + H(+). It carries out the reaction L-threonyl-[protein] + ATP = O-phospho-L-threonyl-[protein] + ADP + H(+). Probable serine/threonine protein kinase which may function redundantly with MPK1-independent branch of the PCK1 pathway that is presumed to be required for the tolerance to high temperatures and staurosporine. This is Serine/threonine-protein kinase ISR1 (ISR1) from Saccharomyces cerevisiae (strain ATCC 204508 / S288c) (Baker's yeast).